The chain runs to 168 residues: CDP-archaeol synthase (168 aa).

5 consecutive transmembrane segments (helical) span residues 7-27 (PLES…PVLL), 55-75 (GLAT…SATC), 80-100 (YAAG…GAFI), 109-129 (GAPA…LALY), and 130-150 (AAGY…VIAL).

The protein belongs to the CDP-archaeol synthase family. Mg(2+) serves as cofactor.

Its subcellular location is the cell membrane. The catalysed reaction is 2,3-bis-O-(geranylgeranyl)-sn-glycerol 1-phosphate + CTP + H(+) = CDP-2,3-bis-O-(geranylgeranyl)-sn-glycerol + diphosphate. Its pathway is membrane lipid metabolism; glycerophospholipid metabolism. In terms of biological role, catalyzes the formation of CDP-2,3-bis-(O-geranylgeranyl)-sn-glycerol (CDP-archaeol) from 2,3-bis-(O-geranylgeranyl)-sn-glycerol 1-phosphate (DGGGP) and CTP. This reaction is the third ether-bond-formation step in the biosynthesis of archaeal membrane lipids. This is CDP-archaeol synthase from Hyperthermus butylicus (strain DSM 5456 / JCM 9403 / PLM1-5).